A 257-amino-acid chain; its full sequence is Chlorocatechol 1,2-dioxygenase (257 aa).

Fe cation is bound by residues tyrosine 134, tyrosine 169, histidine 194, and histidine 196.

Belongs to the intradiol ring-cleavage dioxygenase family. Requires Fe(3+) as cofactor.

It carries out the reaction 4-chlorocatechol + O2 = 3-chloro-cis,cis-muconate + 2 H(+). It catalyses the reaction 3,5-dichlorocatechol + O2 = (2E,4E)-2,4-dichloromuconate + 2 H(+). The polypeptide is Chlorocatechol 1,2-dioxygenase (clcA) (Rhodococcus opacus (Nocardia opaca)).